We begin with the raw amino-acid sequence, 328 residues long: Glucokinase (328 aa).

16-21 (ADIGGT) lines the ATP pocket.

The protein belongs to the bacterial glucokinase family.

It localises to the cytoplasm. The catalysed reaction is D-glucose + ATP = D-glucose 6-phosphate + ADP + H(+). In Neisseria meningitidis serogroup C (strain 053442), this protein is Glucokinase.